A 244-amino-acid chain; its full sequence is Methylthioribulose-1-phosphate dehydratase (244 aa).

C89 serves as a coordination point for substrate. Residues H107 and H109 each contribute to the Zn(2+) site. The active-site Proton donor/acceptor is E130. H192 contributes to the Zn(2+) binding site.

Belongs to the aldolase class II family. MtnB subfamily. Requires Zn(2+) as cofactor.

The protein localises to the cytoplasm. The catalysed reaction is 5-(methylsulfanyl)-D-ribulose 1-phosphate = 5-methylsulfanyl-2,3-dioxopentyl phosphate + H2O. The protein operates within amino-acid biosynthesis; L-methionine biosynthesis via salvage pathway; L-methionine from S-methyl-5-thio-alpha-D-ribose 1-phosphate: step 2/6. Catalyzes the dehydration of methylthioribulose-1-phosphate (MTRu-1-P) into 2,3-diketo-5-methylthiopentyl-1-phosphate (DK-MTP-1-P). The chain is Methylthioribulose-1-phosphate dehydratase from Saccharomyces cerevisiae (strain AWRI1631) (Baker's yeast).